The sequence spans 214 residues: Thymidylate kinase (214 aa).

12-19 (GGEGAGKS) contributes to the ATP binding site.

This sequence belongs to the thymidylate kinase family.

It catalyses the reaction dTMP + ATP = dTDP + ADP. Phosphorylation of dTMP to form dTDP in both de novo and salvage pathways of dTTP synthesis. In Gluconobacter oxydans (strain 621H) (Gluconobacter suboxydans), this protein is Thymidylate kinase.